We begin with the raw amino-acid sequence, 907 residues long: Probable disease resistance protein At1g58390 (907 aa).

The 313-residue stretch at 144–456 (QGDRQREMRQ…AEGISTAEDY (313 aa)) folds into the NB-ARC domain. ATP is bound at residue 190–197 (GMGGLGKT). LRR repeat units follow at residues 608 to 631 (LIHL…LGNL) and 843 to 868 (MPLL…RFIY).

This sequence belongs to the disease resistance NB-LRR family.

Possible disease resistance protein. This chain is Probable disease resistance protein At1g58390, found in Arabidopsis thaliana (Mouse-ear cress).